The chain runs to 855 residues: Protein translocase subunit SecA (855 aa).

Residues Gln-88, 106–110, and Asp-509 each bind ATP; that span reads GEGKT. The segment at 815–837 is disordered; it reads EANLQNKFEKKPARNEPCPCGSG. Zn(2+) contacts are provided by Cys-832, Cys-834, Cys-843, and Cys-844.

This sequence belongs to the SecA family. In terms of assembly, monomer and homodimer. Part of the essential Sec protein translocation apparatus which comprises SecA, SecYEG and auxiliary proteins SecDF-YajC and YidC. Requires Zn(2+) as cofactor.

It localises to the cell inner membrane. It is found in the cytoplasm. The catalysed reaction is ATP + H2O + cellular proteinSide 1 = ADP + phosphate + cellular proteinSide 2.. Part of the Sec protein translocase complex. Interacts with the SecYEG preprotein conducting channel. Has a central role in coupling the hydrolysis of ATP to the transfer of proteins into and across the cell membrane, serving as an ATP-driven molecular motor driving the stepwise translocation of polypeptide chains across the membrane. This Campylobacter fetus subsp. fetus (strain 82-40) protein is Protein translocase subunit SecA.